Consider the following 258-residue polypeptide: MAASVLNTLLRRLPMLSLFRGAHRVQVPLQTLCTKPPSEEDSLSPVPISPYKDEPWKYLESEEYQERYGSRPVWADYRRNHKGGVPPQRTRKTCIRGNKVAGNPCPICRDHKLHVDFRNVKLLEQFVCAHTGIIFHSLYTGVCVKQHKRLTQAIQKARDHGLLIYHIPQVEPRDRDFSISHGAVSATPPAPTLISGDPWYPWYNWKQPPERELSRLRRLYQGHLREESGPPPESMPKMPPTAPAEASFTGQTDPQSAL.

The N-terminal 35 residues, 1 to 35 (MAASVLNTLLRRLPMLSLFRGAHRVQVPLQTLCTK), are a transit peptide targeting the mitochondrion. A phosphoserine mark is found at Ser-38 and Ser-49. The interval 218-258 (RLYQGHLREESGPPPESMPKMPPTAPAEASFTGQTDPQSAL) is disordered. Positions 229–242 (GPPPESMPKMPPTA) are enriched in pro residues. A compositionally biased stretch (polar residues) spans 248–258 (FTGQTDPQSAL).

The protein belongs to the bacterial ribosomal protein bS18 family. Mitochondrion-specific ribosomal protein mS40 subfamily. In terms of assembly, component of the mitochondrial ribosome small subunit (28S) which comprises a 12S rRNA and about 30 distinct proteins.

Its subcellular location is the mitochondrion. The protein is Small ribosomal subunit protein mS40 (MRPS18B) of Macaca mulatta (Rhesus macaque).